A 222-amino-acid chain; its full sequence is Flagellar L-ring protein (222 aa).

An N-terminal signal peptide occupies residues 1-21; it reads MQTFLYPRTWLILGLLLLGSG. Cys22 carries the N-palmitoyl cysteine lipid modification. Residue Cys22 is the site of S-diacylglycerol cysteine attachment.

This sequence belongs to the FlgH family. The basal body constitutes a major portion of the flagellar organelle and consists of four rings (L,P,S, and M) mounted on a central rod.

The protein localises to the cell outer membrane. Its subcellular location is the bacterial flagellum basal body. Assembles around the rod to form the L-ring and probably protects the motor/basal body from shearing forces during rotation. The polypeptide is Flagellar L-ring protein (Methylobacillus flagellatus (strain ATCC 51484 / DSM 6875 / VKM B-1610 / KT)).